The following is a 298-amino-acid chain: Ribosomal RNA small subunit methyltransferase A (298 aa).

Positions 30, 32, 57, 78, 108, and 126 each coordinate S-adenosyl-L-methionine.

The protein belongs to the class I-like SAM-binding methyltransferase superfamily. rRNA adenine N(6)-methyltransferase family. RsmA subfamily.

It localises to the cytoplasm. The enzyme catalyses adenosine(1518)/adenosine(1519) in 16S rRNA + 4 S-adenosyl-L-methionine = N(6)-dimethyladenosine(1518)/N(6)-dimethyladenosine(1519) in 16S rRNA + 4 S-adenosyl-L-homocysteine + 4 H(+). Specifically dimethylates two adjacent adenosines (A1518 and A1519) in the loop of a conserved hairpin near the 3'-end of 16S rRNA in the 30S particle. May play a critical role in biogenesis of 30S subunits. This chain is Ribosomal RNA small subunit methyltransferase A, found in Cutibacterium acnes (strain DSM 16379 / KPA171202) (Propionibacterium acnes).